The chain runs to 220 residues: Adenylate kinase (220 aa).

Residue 10-15 (GSGKST) participates in ATP binding. Positions 30–59 (ASGDIIRAEIKARTPLGIEMERYLSRGDLI) are NMP. Residues Arg-36, 57–59 (DLI), 83–86 (GYPR), and Gln-90 contribute to the AMP site. The segment at 124-161 (GRRICSKCGAVYHVEFNPPKVPGKCDICGGELIQRPDD) is LID. Arg-125 contributes to the ATP binding site. Residues Cys-128 and Cys-131 each contribute to the Zn(2+) site. 134–135 (VY) is an ATP binding site. Residues Cys-148 and Cys-151 each contribute to the Zn(2+) site. The AMP site is built by Arg-158 and Arg-169. ATP is bound at residue Gly-197.

Belongs to the adenylate kinase family. As to quaternary structure, monomer.

It localises to the cytoplasm. It carries out the reaction AMP + ATP = 2 ADP. It participates in purine metabolism; AMP biosynthesis via salvage pathway; AMP from ADP: step 1/1. Functionally, catalyzes the reversible transfer of the terminal phosphate group between ATP and AMP. Plays an important role in cellular energy homeostasis and in adenine nucleotide metabolism. This is Adenylate kinase from Pyrococcus abyssi (strain GE5 / Orsay).